The sequence spans 457 residues: Transmembrane protease serine 5 (457 aa).

The segment at 1–21 is disordered; that stretch reads MSLMLDDQPPMEAQYAEEGPG. Topologically, residues 1–49 are cytoplasmic; it reads MSLMLDDQPPMEAQYAEEGPGPGIFRAEPGDQQHPISQAVCWRSMRRGC. A helical; Signal-anchor for type II membrane protein transmembrane segment spans residues 50–70; sequence AVLGALGLLAGAGVGSWLLVL. At 71-457 the chain is on the extracellular side; that stretch reads YLCPAASQPI…IHDTAQDSLL (387 aa). In terms of domain architecture, SRCR spans 112 to 207; sequence FRINSEDFLL…SGQVVSLRCS (96 aa). 7 disulfide bridges follow: Cys-135–Cys-196, Cys-148–Cys-206, Cys-209–Cys-328, Cys-243–Cys-259, Cys-342–Cys-411, Cys-374–Cys-390, and Cys-401–Cys-429. N-linked (GlcNAc...) asparagine glycans are attached at residues Asn-163, Asn-170, and Asn-195. In terms of domain architecture, Peptidase S1 spans 218 to 453; it reads IVGGQSVAPG…FLDWIHDTAQ (236 aa). Catalysis depends on charge relay system residues His-258 and Asp-308. N-linked (GlcNAc...) asparagine glycans are attached at residues Asn-319 and Asn-375. The active-site Charge relay system is Ser-405.

This sequence belongs to the peptidase S1 family. As to expression, brain-specific. Predominantly expressed in neurons, in their axons, and at the synapses of motoneurons in the spinal cord.

The protein localises to the cell membrane. Functionally, may play a role in hearing. This chain is Transmembrane protease serine 5 (TMPRSS5), found in Homo sapiens (Human).